The primary structure comprises 232 residues: Cytidylate kinase (232 aa).

An ATP-binding site is contributed by Gly11–Thr19.

Belongs to the cytidylate kinase family. Type 1 subfamily.

The protein localises to the cytoplasm. It catalyses the reaction CMP + ATP = CDP + ADP. The enzyme catalyses dCMP + ATP = dCDP + ADP. The chain is Cytidylate kinase from Roseiflexus castenholzii (strain DSM 13941 / HLO8).